The primary structure comprises 417 residues: UDP-N-acetylglucosamine 1-carboxyvinyltransferase (417 aa).

Residue 22–23 coordinates phosphoenolpyruvate; it reads KN. UDP-N-acetyl-alpha-D-glucosamine is bound at residue R93. C117 acts as the Proton donor in catalysis. Residue C117 is modified to 2-(S-cysteinyl)pyruvic acid O-phosphothioketal. UDP-N-acetyl-alpha-D-glucosamine-binding positions include 122–126, D304, and I326; that span reads RPVDQ.

The protein belongs to the EPSP synthase family. MurA subfamily.

Its subcellular location is the cytoplasm. The enzyme catalyses phosphoenolpyruvate + UDP-N-acetyl-alpha-D-glucosamine = UDP-N-acetyl-3-O-(1-carboxyvinyl)-alpha-D-glucosamine + phosphate. It functions in the pathway cell wall biogenesis; peptidoglycan biosynthesis. Its function is as follows. Cell wall formation. Adds enolpyruvyl to UDP-N-acetylglucosamine. The sequence is that of UDP-N-acetylglucosamine 1-carboxyvinyltransferase from Neisseria meningitidis serogroup B (strain ATCC BAA-335 / MC58).